A 182-amino-acid polypeptide reads, in one-letter code: UPF0316 protein BCB4264_A3368 (182 aa).

A run of 3 helical transmembrane segments spans residues 6 to 26 (LIFV…ILLV), 32 to 52 (SAAG…GIVF), and 58 to 78 (WMNI…GGYI).

The protein belongs to the UPF0316 family.

It is found in the cell membrane. This chain is UPF0316 protein BCB4264_A3368, found in Bacillus cereus (strain B4264).